We begin with the raw amino-acid sequence, 456 residues long: Ribosomal RNA small subunit methyltransferase F (456 aa).

S-adenosyl-L-methionine-binding positions include 109–115, glutamate 133, arginine 138, and aspartate 177; that span reads AAAPGGK. Residue cysteine 230 is the Nucleophile of the active site.

Belongs to the class I-like SAM-binding methyltransferase superfamily. RsmB/NOP family.

The protein resides in the cytoplasm. It carries out the reaction cytidine(1400) in 16S rRNA + S-adenosyl-L-methionine = 5-methylcytidine(1400) in 16S rRNA + S-adenosyl-L-homocysteine + H(+). The enzyme catalyses cytidine(1404) in 16S rRNA + S-adenosyl-L-methionine = 5-methylcytidine(1404) in 16S rRNA + S-adenosyl-L-homocysteine + H(+). It catalyses the reaction cytidine(1407) in 16S rRNA + S-adenosyl-L-methionine = 5-methylcytidine(1407) in 16S rRNA + S-adenosyl-L-homocysteine + H(+). Functionally, specifically methylates the cytosines at positions 1400 (m5C1400), 1404 (m5C1404) and 1407 (m5C1407) of 16S rRNA. C1400, C1404 and C1407 are methylated in a 30S subunit substrate, but only C1400 and C1404 are methylated when naked 16S rRNA is the substrate. Methylation by RsmF may facilitate growth at temperatures outside the optimal growth temperature. This Thermus thermophilus (strain ATCC 27634 / DSM 579 / HB8) protein is Ribosomal RNA small subunit methyltransferase F.